The following is a 269-amino-acid chain: Uncharacterised methyltransferase MT1546 (269 aa).

The protein belongs to the methyltransferase superfamily.

The chain is Uncharacterised methyltransferase MT1546 from Mycobacterium tuberculosis (strain CDC 1551 / Oshkosh).